Reading from the N-terminus, the 117-residue chain is Holo-[acyl-carrier-protein] synthase (117 aa).

2 residues coordinate Mg(2+): D8 and E58.

This sequence belongs to the P-Pant transferase superfamily. AcpS family. The cofactor is Mg(2+).

It is found in the cytoplasm. The enzyme catalyses apo-[ACP] + CoA = holo-[ACP] + adenosine 3',5'-bisphosphate + H(+). In terms of biological role, transfers the 4'-phosphopantetheine moiety from coenzyme A to a Ser of acyl-carrier-protein. This Staphylococcus epidermidis (strain ATCC 35984 / DSM 28319 / BCRC 17069 / CCUG 31568 / BM 3577 / RP62A) protein is Holo-[acyl-carrier-protein] synthase.